The primary structure comprises 887 residues: Pyruvate dehydrogenase E1 component (887 aa).

In terms of assembly, homodimer. Part of the PDH complex, consisting of multiple copies of pyruvate dehydrogenase (E1), dihydrolipoamide acetyltransferase (E2) and lipoamide dehydrogenase (E3). Requires thiamine diphosphate as cofactor.

It catalyses the reaction N(6)-[(R)-lipoyl]-L-lysyl-[protein] + pyruvate + H(+) = N(6)-[(R)-S(8)-acetyldihydrolipoyl]-L-lysyl-[protein] + CO2. Its function is as follows. Component of the pyruvate dehydrogenase (PDH) complex, that catalyzes the overall conversion of pyruvate to acetyl-CoA and CO(2). The chain is Pyruvate dehydrogenase E1 component (aceE) from Buchnera aphidicola subsp. Baizongia pistaciae (strain Bp).